We begin with the raw amino-acid sequence, 376 residues long: MQWASVLLLAGLCSLSQGQYDEDSHWWIQYLRNQQSTYYDPYDPYPYEPSEPYPYGVEEGPAYAYGAPPPPEPRDCPQECDCPPNFPTAMYCDNRNLKYLPFVPSRMKYVYFQNNQISAIQEGVFDNATGLLWVALHGNQITSDKVGRKVFSKLRHLERLYLDHNNLTRMPGPLPRSLRELHLDHNQISRVPNNALEGLENLTALYLHHNEIQEVGSSMRGLRSLILLDLSYNHLRRVPDGLPSALEQLYLEHNNVYTVPDSYFRGSPKLLYVRLSHNSLTNNGLATNTFNSSSLLELDLSYNQLQKIPPVNTNLENLYLQGNRINEFSISSFCTVVDVMNFSKLQVLRLDGNEIKRSAMPVDAPLCLRLANLIEI.

A signal peptide spans 1–18 (MQWASVLLLAGLCSLSQG). At Q19 the chain carries Pyrrolidone carboxylic acid. Sulfotyrosine is present on residues Y20, Y38, Y53, Y55, Y63, and Y65. Positions 67-105 (APPPPEPRDCPQECDCPPNFPTAMYCDNRNLKYLPFVPS) constitute an LRRNT domain. LRR repeat units follow at residues 106-127 (RMKY…VFDN), 130-151 (GLLW…RKVF), 156-176 (HLER…PLPR), 177-198 (SLRE…ALEG), 201-222 (NLTA…MRGL), 224-245 (SLIL…LPSA), 246-266 (LEQL…YFRG), and 269-289 (KLLY…ATNT). The N-linked (GlcNAc...) (keratan sulfate) asparagine glycan is linked to N127. A glycan (N-linked (GlcNAc...) (keratan sulfate) asparagine) is linked at N166. N201 is a glycosylation site (N-linked (GlcNAc...) (keratan sulfate) asparagine). N291 carries N-linked (GlcNAc...) (keratan sulfate) asparagine glycosylation. LRR repeat units lie at residues 294-315 (SLLE…NTNL) and 316-335 (ENLY…SFCT). C334 and C367 form a disulfide bridge. N-linked (GlcNAc...) asparagine glycosylation occurs at N341. Residues 344-367 (KLQVLRLDGNEIKRSAMPVDAPLC) form an LRR 11 repeat.

It belongs to the small leucine-rich proteoglycan (SLRP) family. SLRP class II subfamily. As to quaternary structure, binds to type I and type II collagen. Binds keratan sulfate chains. In terms of processing, sulfated on tyrosine residue(s). As to expression, highest levels observed in knee epiphysis, in calvarial and diaphyseal bone, in nasal and costal cartilage, in the eye, and in bladder. In mature knee joint it is mostly present in the proliferating zone of growth plate. It is also observed in ligaments, especially at insertion sites, in the junction between meniscus and joint capsule, in the perimysium of skeletal muscle and in the periosteum.

It is found in the secreted. Its subcellular location is the extracellular space. It localises to the extracellular matrix. Affects the rate of fibrils formation. May have a primary role in collagen fibrillogenesis. This Mus musculus (Mouse) protein is Fibromodulin (Fmod).